A 397-amino-acid polypeptide reads, in one-letter code: Probable peptidoglycan glycosyltransferase FtsW (397 aa).

Over 1 to 26 (MSPRNSALERFRQHQKIPEKRWQRLA) the chain is Cytoplasmic. The chain crosses the membrane as a helical span at residues 27-47 (FPDVGLLLCWLALIVIGMVMV). Over 48 to 69 (TSSSLSEAHVERLSTHHFAIRQ) the chain is Periplasmic. A helical membrane pass occupies residues 70 to 90 (GIFYVGSSIFAYIAFMLGTNF). Residues 91–96 (YREKAK) are Cytoplasmic-facing. A helical transmembrane segment spans residues 97-117 (FILGLAFLGLLLVYAPGIGVV). Topologically, residues 118-126 (VNGSRRWLN) are periplasmic. The chain crosses the membrane as a helical span at residues 127–147 (LGVINLQVGEFAKLAVFIFTA). The Cytoplasmic portion of the chain corresponds to 148 to 159 (AYLQHHTQRLDH). The helical transmembrane segment at 160–180 (SWQPIIGLLAVTACFALMFYL) threads the bilayer. Topologically, residues 181–185 (QPDFG) are periplasmic. A helical transmembrane segment spans residues 186–206 (TMVVIVATVLGMLFLSGVSIW). Arg207 is a topological domain (cytoplasmic). The chain crosses the membrane as a helical span at residues 208–228 (LLLLGVLIAPAMVWVLISESY). The Periplasmic segment spans residues 229 to 294 (RLRRLTTFIN…IFSIIAEETG (66 aa)). The chain crosses the membrane as a helical span at residues 295–315 (LVGALIVMAILMILVWRAFAI). Over 316–328 (GYLADRMRKRFSS) the chain is Cytoplasmic. A helical transmembrane segment spans residues 329 to 349 (LLAYGIGLWLGLQSLINIGVT). Over 350–359 (TGALPTKGLT) the chain is Periplasmic. The chain crosses the membrane as a helical span at residues 360 to 380 (LPLISYGGSSILMTSIALAIL). The Cytoplasmic segment spans residues 381 to 397 (ARIDAESRFIARLEGKI).

It belongs to the SEDS family. FtsW subfamily.

It is found in the cell inner membrane. The enzyme catalyses [GlcNAc-(1-&gt;4)-Mur2Ac(oyl-L-Ala-gamma-D-Glu-L-Lys-D-Ala-D-Ala)](n)-di-trans,octa-cis-undecaprenyl diphosphate + beta-D-GlcNAc-(1-&gt;4)-Mur2Ac(oyl-L-Ala-gamma-D-Glu-L-Lys-D-Ala-D-Ala)-di-trans,octa-cis-undecaprenyl diphosphate = [GlcNAc-(1-&gt;4)-Mur2Ac(oyl-L-Ala-gamma-D-Glu-L-Lys-D-Ala-D-Ala)](n+1)-di-trans,octa-cis-undecaprenyl diphosphate + di-trans,octa-cis-undecaprenyl diphosphate + H(+). It functions in the pathway cell wall biogenesis; peptidoglycan biosynthesis. In terms of biological role, peptidoglycan polymerase that is essential for cell division. In Dichelobacter nodosus (strain VCS1703A), this protein is Probable peptidoglycan glycosyltransferase FtsW.